Consider the following 27-residue polypeptide: U1-poneritoxin-Na3b (27 aa).

Belongs to the ponericin-G family. Expressed by the venom gland.

It localises to the secreted. Its function is as follows. Shows a broad spectrum of activity against both Gram-positive and Gram-negative bacteria. Also has antimicrobial activity against S.cerevisiae. Has insecticidal and non-hemolytic activity. The polypeptide is U1-poneritoxin-Na3b (Neoponera apicalis (Ant)).